The primary structure comprises 853 residues: Leucine--tRNA ligase (853 aa).

The 'HIGH' region signature appears at 42–52 (PYPSGNLHMGH). The short motif at 615-619 (KMSKS) is the 'KMSKS' region element. K618 contacts ATP.

Belongs to the class-I aminoacyl-tRNA synthetase family.

It is found in the cytoplasm. The enzyme catalyses tRNA(Leu) + L-leucine + ATP = L-leucyl-tRNA(Leu) + AMP + diphosphate. The chain is Leucine--tRNA ligase from Crocosphaera subtropica (strain ATCC 51142 / BH68) (Cyanothece sp. (strain ATCC 51142)).